The primary structure comprises 677 residues: MKERDSESFESLSHQVLPNTSNSTHMIQMAMANSGSSAAAQAGQDQPDRSKWLLDCPEPPSPWHELKRQVKGSFLTKAKKFKSLQKQPFPKQILSVLQAIFPIFGWCRNYKLTMFKNDLMAGLTLASLCIPQSIGYATLAKLDPQYGLYTSVVPPLIYALMGTSREIAIGPVAVVSLLISSMLQKLIDPETDPLGYKKLVLTTTFFAGIFQASFGLFRLGFLVDFLSHAAIVGFMGGAAIVIGLQQLKGLLGITNFTTNTDIVSVLRAVWRSCQQQWSPHTFILGCSFLSFILITRFIGKKYKKLFWLPAIAPLIAVVVSTLMVFLTKADEHGVKTVRHIKGGLNPMSIQDLDFNTPHLGQIAKIGLIIAIVALTEAIAVGRSFAGIKGYRLDGNKEMVAIGFMNVLGSFTSCYAATGSFSRTAVNFAAGCETAMSNIVMAVTVFVALECLTRLLYYTPIAILASIILSALPGLININEAIHIWKVDKFDFLALIGAFFGVLFASVEIGLLVAVVISFAKIILISIRPGIETLGRMPGTDTFTDTNQYPMTVKTPGVLIFRVKSALLCFANASSIEERIMGWVDEEEEEENTKSNAKRKILFVVLDMSSLINVDTSGITALLELHNKLIKTGVELVIVNPKWQVIHKLNQAKFVDRIGGKVYLTIGEALDACFGLKV.

Residues 1-118 (MKERDSESFE…NYKLTMFKND (118 aa)) are Cytoplasmic-facing. The segment at 23 to 54 (STHMIQMAMANSGSSAAAQAGQDQPDRSKWLL) is disordered. The span at 28-44 (QMAMANSGSSAAAQAGQ) shows a compositional bias: low complexity. The helical transmembrane segment at 119 to 139 (LMAGLTLASLCIPQSIGYATL) threads the bilayer. Residues 140 to 141 (AK) lie on the Extracellular side of the membrane. A helical transmembrane segment spans residues 142–162 (LDPQYGLYTSVVPPLIYALMG). Residues 163 to 166 (TSRE) are Cytoplasmic-facing. A helical membrane pass occupies residues 167 to 187 (IAIGPVAVVSLLISSMLQKLI). The Extracellular segment spans residues 188-198 (DPETDPLGYKK). A helical membrane pass occupies residues 199-219 (LVLTTTFFAGIFQASFGLFRL). At 220–221 (GF) the chain is on the cytoplasmic side. The helical transmembrane segment at 222–242 (LVDFLSHAAIVGFMGGAAIVI) threads the bilayer. The Extracellular portion of the chain corresponds to 243–278 (GLQQLKGLLGITNFTTNTDIVSVLRAVWRSCQQQWS). The N-linked (GlcNAc...) asparagine glycan is linked to asparagine 255. A helical membrane pass occupies residues 279-299 (PHTFILGCSFLSFILITRFIG). The Cytoplasmic segment spans residues 300 to 304 (KKYKK). A helical transmembrane segment spans residues 305-325 (LFWLPAIAPLIAVVVSTLMVF). Residues 326–360 (LTKADEHGVKTVRHIKGGLNPMSIQDLDFNTPHLG) lie on the Extracellular side of the membrane. A helical transmembrane segment spans residues 361–381 (QIAKIGLIIAIVALTEAIAVG). Residues 382 to 397 (RSFAGIKGYRLDGNKE) lie on the Cytoplasmic side of the membrane. Residues 398–418 (MVAIGFMNVLGSFTSCYAATG) form a helical membrane-spanning segment. The Extracellular segment spans residues 419–426 (SFSRTAVN). A helical transmembrane segment spans residues 427 to 447 (FAAGCETAMSNIVMAVTVFVA). At 448 to 454 (LECLTRL) the chain is on the cytoplasmic side. Residues 455 to 475 (LYYTPIAILASIILSALPGLI) traverse the membrane as a helical segment. Topologically, residues 476–490 (NINEAIHIWKVDKFD) are extracellular. A helical membrane pass occupies residues 491–511 (FLALIGAFFGVLFASVEIGLL). The Cytoplasmic portion of the chain corresponds to 512–677 (VAVVISFAKI…ALDACFGLKV (166 aa)). The STAS domain occupies 548 to 672 (YPMTVKTPGV…LTIGEALDAC (125 aa)).

Belongs to the SLC26A/SulP transporter (TC 2.A.53) family. Expressed in root cap, central cylinder of roots and in vascular tissues of leaves.

The protein resides in the membrane. In terms of biological role, low-affinity H(+)/sulfate cotransporter that may be involved in root-to-shoot translocation of sulfate. Plays a central role in the regulation of sulfate assimilation. This chain is Sulfate transporter 2.1 (SULTR2;1), found in Arabidopsis thaliana (Mouse-ear cress).